Reading from the N-terminus, the 168-residue chain is Protein OPG162 (168 aa).

At 1-14 (MKSLNRQTVSMFKK) the chain is on the intravirion side. Residues 15 to 37 (LSVPAAIMMILSTIISGIGTFLH) traverse the membrane as a helical segment. At 38 to 168 (YKEELMPSAC…SVLCVKKFYK (131 aa)) the chain is on the virion surface side. The region spanning 54–163 (YDKHCYLDTN…CKSTQSVLCV (110 aa)) is the C-type lectin domain. Disulfide bonds link Cys75/Cys162 and Cys141/Cys154. Asn133 is a glycosylation site (N-linked (GlcNAc...) asparagine; by host).

The protein belongs to the orthopoxvirus OPG162 protein family. As to quaternary structure, interacts with protein OPG161. Interacts with protein OPG164. Interacts with protein OPG190.

Its subcellular location is the virion membrane. The protein resides in the host Golgi apparatus. Functionally, forms a complex with OPG162 and OPG190 to coordinate the incorporation of OPG164 into wrapped enveloped virion (EV) membranes and, subsequently, the production of actin tails. Therefore plays an essential role in efficient cell-to-cell spread of viral particles. This chain is Protein OPG162 (OPG162), found in Homo sapiens (Human).